A 58-amino-acid chain; its full sequence is Photosystem II reaction center protein K (58 aa).

Residues Met1–Ala21 constitute a propeptide that is removed on maturation. Residues Ile29–Phe49 traverse the membrane as a helical segment.

Belongs to the PsbK family. As to quaternary structure, PSII is composed of 1 copy each of membrane proteins PsbA, PsbB, PsbC, PsbD, PsbE, PsbF, PsbH, PsbI, PsbJ, PsbK, PsbL, PsbM, PsbT, PsbX, PsbY, PsbZ, Psb30/Ycf12, at least 3 peripheral proteins of the oxygen-evolving complex and a large number of cofactors. It forms dimeric complexes.

The protein resides in the plastid. It localises to the chloroplast thylakoid membrane. In terms of biological role, one of the components of the core complex of photosystem II (PSII). PSII is a light-driven water:plastoquinone oxidoreductase that uses light energy to abstract electrons from H(2)O, generating O(2) and a proton gradient subsequently used for ATP formation. It consists of a core antenna complex that captures photons, and an electron transfer chain that converts photonic excitation into a charge separation. The polypeptide is Photosystem II reaction center protein K (Adiantum capillus-veneris (Maidenhair fern)).